We begin with the raw amino-acid sequence, 392 residues long: Outer membrane protein assembly factor BamB (392 aa).

Residues 1-19 (MQLRKLLLPGLLSVTLLSG) form the signal peptide. Residue Cys20 is the site of N-palmitoyl cysteine attachment. Cys20 is lipidated: S-diacylglycerol cysteine.

Belongs to the BamB family. Part of the Bam complex, which is composed of the outer membrane protein BamA, and four lipoproteins BamB, BamC, BamD and BamE.

Its subcellular location is the cell outer membrane. Functionally, part of the outer membrane protein assembly complex, which is involved in assembly and insertion of beta-barrel proteins into the outer membrane. The protein is Outer membrane protein assembly factor BamB of Salmonella typhimurium (strain LT2 / SGSC1412 / ATCC 700720).